We begin with the raw amino-acid sequence, 476 residues long: Amino acid permease 3 (476 aa).

Topologically, residues 1–33 (MVQNHQTVLAVDMPQTGGSKYLDDDGKNKRTGS) are cytoplasmic. The chain crosses the membrane as a helical span at residues 34–54 (VWTASAHIITAVIGSGVLSLA). Residues 55-57 (WAT) are Extracellular-facing. The helical transmembrane segment at 58–78 (AQLGWLAGPVVMLLFSAVTYF) threads the bilayer. The Cytoplasmic portion of the chain corresponds to 79–122 (TSSLLAACYRSGDPISGKRNYTYMDAVRSNLGGVKVTLCGIVQY). Residues 123-143 (LNIFGVAIGYTIASAISMMAI) form a helical membrane-spanning segment. Over 144 to 166 (KRSNCFHKSGGKDPCHMNSNPYM) the chain is Extracellular. Helical transmembrane passes span 167 to 187 (IAFG…QLWW) and 188 to 208 (LSIL…ALGI). Topologically, residues 209–277 (AQVVVNGKVK…EEKTMKKATL (69 aa)) are extracellular. The helical transmembrane segment at 278–298 (VSVSVTTMFYMLCGCMGYAAF) threads the bilayer. Residues 299–300 (GD) are Cytoplasmic-facing. The helical transmembrane segment at 301–321 (LSPGNLLTGFGFYNPYWLLDI) threads the bilayer. Topologically, residues 322 to 324 (ANA) are extracellular. Residues 325–345 (AIVIHLIGAYQVYCQPLFAFI) form a helical membrane-spanning segment. Residues 346 to 384 (EKQASIQFPDSEFIAKDIKIPIPGFKPLRLNVFRLIWRT) are Cytoplasmic-facing. The next 2 membrane-spanning stretches (helical) occupy residues 385 to 405 (VFVI…DVVG) and 406 to 426 (LLGA…MYIA). Residues 427-441 (QKKIPRWSTRWVCLQ) lie on the Cytoplasmic side of the membrane. Residues 442–462 (VFSLGCLVVSIAAAAGSIAGV) form a helical membrane-spanning segment. Over 463–476 (LLDLKSYKPFRSEY) the chain is Extracellular.

Belongs to the amino acid/polyamine transporter 2 family. Amino acid/auxin permease (AAAP) (TC 2.A.18.2) subfamily. As to expression, expressed in the root phloem. Detected in stamens, in cotyledons, and in major veins of mature leaves.

The protein localises to the cell membrane. The protein resides in the nucleus membrane. It localises to the endomembrane system. Its activity is regulated as follows. Inhibited by carbonylcyanide m-chlorophenylhydrazone and 2,4-dinitrophenol. Its function is as follows. Amino acid-proton symporter. Stereospecific transporter with a broad specificity for GABA, tryptophan and both neutral and basic amino acids. High affinity transport of cationic amino acids. In Arabidopsis thaliana (Mouse-ear cress), this protein is Amino acid permease 3 (AAP3).